Here is an 86-residue protein sequence, read N- to C-terminus: uncharacterized protein (86 aa).

This is an uncharacterized protein from Sus scrofa (Pig).